Reading from the N-terminus, the 263-residue chain is Tetraspanin-7 (263 aa).

The Cytoplasmic segment spans residues 1 to 7 (MVQCSNN). A helical membrane pass occupies residues 8-28 (LLGILNFFTFLLSIPILSAGI). Topologically, residues 29–45 (WLGKNAATECERFLDKP) are extracellular. The chain crosses the membrane as a helical span at residues 46–66 (MVVLGIFLMFVSIAGLVGACC). At 67–75 (RVSCLLWLY) the chain is on the cytoplasmic side. Residues 76 to 96 (LFAMFLLILLGFCFTIFAFAV) traverse the membrane as a helical segment. Residues 97–234 (TNRGAGEVIS…NIKNSWKKVA (138 aa)) are Extracellular-facing. An N-linked (GlcNAc...) asparagine glycan is attached at Asn180. A helical transmembrane segment spans residues 235–255 (KVNIVFLIFLIIVYSVGCCAF). Over 256–263 (RNNRKRSW) the chain is Cytoplasmic.

The protein belongs to the tetraspanin (TM4SF) family.

The protein localises to the membrane. In terms of biological role, may be involved in the regulation of cell differentiation. The chain is Tetraspanin-7 (TET7) from Arabidopsis thaliana (Mouse-ear cress).